Here is a 496-residue protein sequence, read N- to C-terminus: Probable uroporphyrinogen-III C-methyltransferase (496 aa).

The protein belongs to the precorrin methyltransferase family.

The enzyme catalyses uroporphyrinogen III + 2 S-adenosyl-L-methionine = precorrin-2 + 2 S-adenosyl-L-homocysteine + H(+). Siroheme synthase involved in methionine biosynthesis. This is Probable uroporphyrinogen-III C-methyltransferase from Schizosaccharomyces pombe (strain 972 / ATCC 24843) (Fission yeast).